The chain runs to 441 residues: Serine/threonine-protein phosphatase 2A activator 1 (441 aa).

Polar residues-rich tracts occupy residues 66–75 (NIPPSNTTHS) and 421–432 (QRQDDLNSTTYR). Disordered regions lie at residues 66–100 (NIPP…SSNQ) and 421–441 (QRQD…LGRN).

Belongs to the PTPA-type PPIase family.

It localises to the cytoplasm. The protein resides in the nucleus. It catalyses the reaction [protein]-peptidylproline (omega=180) = [protein]-peptidylproline (omega=0). PPIases accelerate the folding of proteins. It catalyzes the cis-trans isomerization of proline imidic peptide bonds in oligopeptides. Acts as a regulatory subunit for PP2A-like phosphatases modulating their activity or substrate specificity, probably by inducing a conformational change in the catalytic subunit, a direct target of the PPIase. Can reactivate inactive phosphatase PP2A-phosphatase methylesterase complexes (PP2Ai) in presence of ATP and Mg(2+) by dissociating the inactive form from the complex. The polypeptide is Serine/threonine-protein phosphatase 2A activator 1 (RRD1) (Debaryomyces hansenii (strain ATCC 36239 / CBS 767 / BCRC 21394 / JCM 1990 / NBRC 0083 / IGC 2968) (Yeast)).